Consider the following 672-residue polypeptide: GPI mannosyltransferase pigv-1 (672 aa).

The Cytoplasmic segment spans residues 1–134 (MRRREPGRDV…TQRCLGFCFR (134 aa)). Basic and acidic residues predominate over residues 82–94 (REESDSSSSREDS). Residues 82-115 (REESDSSSSREDSPLGSTETGESCSTTDDEESKE) form a disordered region. The span at 97–107 (GSTETGESCST) shows a compositional bias: low complexity. Residues 135–155 (QLFFSRMWVFILQFIASYYAG) form a helical membrane-spanning segment. The Extracellular portion of the chain corresponds to 156–239 (DRFRTDGFNL…NGMESVFGWT (84 aa)). A helical membrane pass occupies residues 240-260 (FPPWVTITLAAVFVNLFCFLL). The Cytoplasmic segment spans residues 261–277 (CGMTLYQVVLIMTRSVK). The next 2 helical transmembrane spans lie at 278 to 298 (ISLL…FSSA) and 299 to 319 (YSES…LFGL). Topologically, residues 320–345 (RGKGFWHRMLKGFTGTICFGLTFAVR) are extracellular. The chain crosses the membrane as a helical span at residues 346 to 366 (SNGLLNFLYVAWIWCGTLLWD). Residues 367 to 423 (EEMPIPDCHKLISTLAATKNERYKQEWQAKFWRFQQKRKQNRKVFRWTDPNFSRCVT) are Cytoplasmic-facing. A helical membrane pass occupies residues 424–444 (LFIVIVCAISATLLFFTPYVF). The Extracellular segment spans residues 445–520 (MTNFTADEFC…WSVKFFGYWK (76 aa)). The chain crosses the membrane as a helical span at residues 521-541 (IKKIPCFLMMLPAAILTVLAI). At 542–569 (KSSWNDVFLNKRWNNIWVLTARSDHSLP) the chain is on the cytoplasmic side. Residues 570 to 590 (MAIHSSVLLFVAIFYINSEVF) form a helical membrane-spanning segment. Residues 591-592 (TR) are Extracellular-facing. A helical membrane pass occupies residues 593–613 (IIFSSSPFIYIYIATYIDKLT). Over 614-648 (QGTIAGNRLWQYFESPGILPFFVFRRVWQDGWRGK) the chain is Cytoplasmic. Residues 649–669 (LLYIYILGYFVFGTMAHSAWL) traverse the membrane as a helical segment. Residues 670–672 (PFT) are Extracellular-facing.

This sequence belongs to the PIGV family. Expressed in epithelial tissues including the epidermis, pharynx, intestine, rectum and excretory cell during embryogenesis.

Its subcellular location is the endoplasmic reticulum membrane. It functions in the pathway glycolipid biosynthesis; glycosylphosphatidylinositol-anchor biosynthesis. Alpha-1,6-mannosyltransferase involved in glycosylphosphatidylinositol-anchor biosynthesis. Transfers the second mannose to the glycosylphosphatidylinositol during GPI precursor assembly. Required for maintenance of epithelial integrity during embryogenesis. This chain is GPI mannosyltransferase pigv-1, found in Caenorhabditis elegans.